We begin with the raw amino-acid sequence, 918 residues long: Leucine--tRNA ligase (918 aa).

The 'HIGH' region motif lies at 40 to 51 (PYPSGVGLHVGH). The 'KMSKS' region motif lies at 692-696 (KMSKS). Residue lysine 695 participates in ATP binding.

This sequence belongs to the class-I aminoacyl-tRNA synthetase family.

It localises to the cytoplasm. The catalysed reaction is tRNA(Leu) + L-leucine + ATP = L-leucyl-tRNA(Leu) + AMP + diphosphate. This chain is Leucine--tRNA ligase, found in Azobacteroides pseudotrichonymphae genomovar. CFP2.